The primary structure comprises 337 residues: Autophagy protein 5 (337 aa).

A Glycyl lysine isopeptide (Lys-Gly) (interchain with G-Cter in ATG12) cross-link involves residue Lys128. A disordered region spans residues 271-290; sequence RAQTSGEERSIDDTEEADGS. Residues 276 to 290 show a composition bias toward basic and acidic residues; that stretch reads GEERSIDDTEEADGS.

This sequence belongs to the ATG5 family. In terms of assembly, conjugated to ATG12. In terms of processing, conjugated to ATG12; which is essential for autophagy. Conjugation with ATG12 involves ATG7 as an E1-like activating enzyme and ATG10 as an E2-like conjugating enzyme. As to expression, ubiquitous.

It is found in the cytoplasm. Its function is as follows. Required for autophagy. Conjugation to ATG12 is essential for plant nutrient recycling. Involved in a negative feedback loop that modulates NPR1-dependent salicylic acid (SA) signaling and limits senescence and immunity-related programmed cell death (PCD) in plants. Involved in complete proteolysis of chloroplast stroma proteins in senescent leaves. Involved in the degradation of damaged peroxisomes. This is Autophagy protein 5 from Arabidopsis thaliana (Mouse-ear cress).